The primary structure comprises 554 residues: 3-(3-hydroxy-phenyl)propionate/3-hydroxycinnamic acid hydroxylase (554 aa).

Residues 17–46 (QVAI…VVEK) and 285–295 (FRIDRVLLAGD) contribute to the FAD site.

It belongs to the PheA/TfdB FAD monooxygenase family. The cofactor is FAD.

It catalyses the reaction 3-(3-hydroxyphenyl)propanoate + NADH + O2 + H(+) = 3-(2,3-dihydroxyphenyl)propanoate + NAD(+) + H2O. The catalysed reaction is (2E)-3-(3-hydroxyphenyl)prop-2-enoate + NADH + O2 + H(+) = (2E)-3-(2,3-dihydroxyphenyl)prop-2-enoate + NAD(+) + H2O. The protein operates within aromatic compound metabolism; 3-phenylpropanoate degradation. Catalyzes the insertion of one atom of molecular oxygen into position 2 of the phenyl ring of 3-(3-hydroxyphenyl)propionate (3-HPP) and hydroxycinnamic acid (3HCI). This chain is 3-(3-hydroxy-phenyl)propionate/3-hydroxycinnamic acid hydroxylase, found in Escherichia coli O139:H28 (strain E24377A / ETEC).